The following is a 171-amino-acid chain: Large ribosomal subunit protein uL5 (171 aa).

This sequence belongs to the universal ribosomal protein uL5 family. Part of the 50S ribosomal subunit; contacts the 5S rRNA and probably tRNA. Forms a bridge to the 30S subunit in the 70S ribosome.

This is one of the proteins that bind and probably mediate the attachment of the 5S RNA into the large ribosomal subunit, where it forms part of the central protuberance. In the 70S ribosome it contacts protein S13 of the 30S subunit (bridge B1b), connecting the 2 subunits; this bridge is implicated in subunit movement. May contact the P site tRNA; the 5S rRNA and some of its associated proteins might help stabilize positioning of ribosome-bound tRNAs. This Methanocorpusculum labreanum (strain ATCC 43576 / DSM 4855 / Z) protein is Large ribosomal subunit protein uL5.